Reading from the N-terminus, the 267-residue chain is Proteasome subunit alpha (267 aa).

A disordered region spans residues 231–267; sequence ETLLQERDSKESAESEEPIESEEGKKTGKKSDADSSD. Composition is skewed to basic and acidic residues over residues 234 to 243 and 252 to 267; these read LQERDSKESA and EEGK…DSSD.

The protein belongs to the peptidase T1A family. In terms of assembly, the 20S proteasome core is composed of 14 alpha and 14 beta subunits that assemble into four stacked heptameric rings, resulting in a barrel-shaped structure. The two inner rings, each composed of seven catalytic beta subunits, are sandwiched by two outer rings, each composed of seven alpha subunits. The catalytic chamber with the active sites is on the inside of the barrel. Has a gated structure, the ends of the cylinder being occluded by the N-termini of the alpha-subunits. Is capped by the proteasome-associated ATPase, ARC.

Its subcellular location is the cytoplasm. The protein operates within protein degradation; proteasomal Pup-dependent pathway. With respect to regulation, the formation of the proteasomal ATPase ARC-20S proteasome complex, likely via the docking of the C-termini of ARC into the intersubunit pockets in the alpha-rings, may trigger opening of the gate for substrate entry. Interconversion between the open-gate and close-gate conformations leads to a dynamic regulation of the 20S proteasome proteolysis activity. Its function is as follows. Component of the proteasome core, a large protease complex with broad specificity involved in protein degradation. The polypeptide is Proteasome subunit alpha (Mycobacterium ulcerans (strain Agy99)).